The following is a 4128-amino-acid chain: DNA-dependent protein kinase catalytic subunit (4128 aa).

K117 is modified (N6-acetyllysine). Residues 288–323 (DNYVSLFEVLLKWCAHTNVELKKAALSALESFLKQV) form an HEAT 1 repeat. 2 positions are modified to phosphoserine: S511 and S687. An N6-acetyllysine modification is found at K828. Phosphoserine is present on residues S841 and S893. One copy of the HEAT 2 repeat lies at 1004 to 1040 (QDTVALLEAILDGIVDPVDSTLRDFCGRCIREFLKWS). A Phosphoserine modification is found at S1065. N6-acetyllysine is present on K1209. The interval 1503–1538 (LDLSCKQLASGLLELAFAFGGLCERLVSLLLNPAVL) is interaction with C1D. Residues 1503–1538 (LDLSCKQLASGLLELAFAFGGLCERLVSLLLNPAVL) are leucine-zipper. The stretch at 1723–1756 (PMQSREFPPGTPRFNNYVDCMKKFLDALELSQSP) is one TPR 1 repeat. K1970 carries the N6-acetyllysine modification. The segment at 2050-2073 (QSYSYSSQDPRPATGRFRRREQRD) is disordered. A Phosphoserine; by autocatalysis modification is found at S2056. K2259 bears the N6-acetyllysine mark. Positions 2436 to 3212 (LDIIYKMMPK…DNSMNVDQDG (777 aa)) are KIP-binding. T2535 bears the Phosphothreonine mark. Residue T2609 is modified to Phosphothreonine; by autocatalysis. S2612 bears the Phosphoserine; by autocatalysis mark. A phosphothreonine; by autocatalysis mark is found at T2638 and T2647. Positions 2737–2765 (EKLSLMYARKGVAEQKREKEIKSELKMKQ) are may split the end of the DNA molecule, with the two strands separating around the region. The residue at position 2789 (S2789) is a Phosphoserine. Residues 2906 to 3539 (PAKRVRGKAR…VYPFIISSES (634 aa)) enclose the FAT domain. 2 TPR repeats span residues 2920 to 2948 (VLRWVELAKLYRSIGEYDVLRGIFTSEIG) and 2949 to 2982 (TKQITQSALLAEARSDYSEAAKQYDEALNKQDWV). The tract at residues 3200–3222 (LPEDNSMNVDQDGDPSDRMEVQE) is disordered. S3205 is subject to Phosphoserine. N6-acetyllysine is present on residues K3241, K3260, K3621, K3638, and K3642. The PI3K/PI4K catalytic domain maps to 3722–4053 (FDERVTVMAS…ICYAKRKLAG (332 aa)). Residues 3728–3734 (VMASLRR) form a G-loop region. A phosphoserine mark is found at S3731 and S3821. The interval 3919–3927 (GIGDRHLNN) is catalytic loop. The segment at 3939–3964 (GIDFGHAFGSATQFLPVPELMPFRLT) is activation loop. At S4026 the chain carries Phosphoserine. Residues 4096–4128 (SGLSEETQVKCLMDQATDPNILGRTWEGWEPWM) enclose the FATC domain.

This sequence belongs to the PI3/PI4-kinase family. DNA-PK is a heterotrimer of PRKDC and the Ku dimer (composed of XRCC6/Ku70 and XRCC5/Ku86). Formation of this complex may be promoted by interaction with ILF3. Component of the core long-range non-homologous end joining (NHEJ) complex (also named DNA-PK complex) composed of PRKDC, LIG4, XRCC4, XRCC6/Ku70, XRCC5/Ku86 and NHEJ1/XLF. Additional component of the NHEJ complex includes PAXX. Following autophosphorylation, PRKDC dissociates from DNA. Interacts with DNA-PKcs-interacting protein (KIP) with the region upstream the kinase domain. PRKDC alone also interacts with and phosphorylates DCLRE1C, thereby activating the latent endonuclease activity of this protein. Interacts with C1D. Interacts with TTI1 and TELO2. Interacts with CIB1. Interacts with SETX. Interacts with NR4A3; the DNA-dependent protein kinase complex DNA-PK phosphorylates and activates NR4A3 and prevents NR4A3 ubiquitination and degradation. Interacts with BRAT1. Part of the HDP-RNP complex composed of at least HEXIM1, PRKDC, XRCC5, XRCC6, paraspeckle proteins (SFPQ, NONO, PSPC1, RBM14, and MATR3) and NEAT1 RNA. Interacts with KAT5. In terms of processing, autophosphorylated at two clusters, the T2609 cluster and the S2056 cluster. Autophosphorylated on Ser-2056, Thr-2609, Thr-2638 and Thr-2647. Ser-2056 and Thr-2609 are DNA damage-inducible phosphorylation sites (inducible with ionizing radiation, IR) dephosphorylated by PPP5C. Autophosphorylation induces a conformational change that leads to remodeling of the DNA-PK complex, requisite for efficient end processing and DNA repair. Autophosphorylation in trans within DNA-PK complexes loaded on DNA ends leads to the dissociation of PRKDC from DNA and the transition into the short-range NHEJ complex. Autophosphorylation of the T2609 cluster is required for hematopoietic development and protein synthesis in erythrocytes precursors. S-nitrosylated by GAPDH. Post-translationally, polyubiquitinated by RNF144A, leading to proteasomal degradation.

The protein resides in the nucleus. The protein localises to the nucleolus. Its subcellular location is the cytoplasm. It localises to the cytosol. It catalyses the reaction L-seryl-[protein] + ATP = O-phospho-L-seryl-[protein] + ADP + H(+). The catalysed reaction is L-threonyl-[protein] + ATP = O-phospho-L-threonyl-[protein] + ADP + H(+). Its activity is regulated as follows. Activity seems to be attenuated by autophosphorylation. Binding to the SL1 region of U3 small nucleolar RNA promotes auto-phosphorylation activity. Inhibited by wortmannin. Its function is as follows. Serine/threonine-protein kinase that acts as a molecular sensor for DNA damage. Involved in DNA non-homologous end joining (NHEJ) required for double-strand break (DSB) repair and V(D)J recombination. Must be bound to DNA to express its catalytic properties. Promotes processing of hairpin DNA structures in V(D)J recombination by activation of the hairpin endonuclease artemis (DCLRE1C). Recruited by XRCC5 and XRCC6 to DNA ends and is required to (1) protect and align broken ends of DNA, thereby preventing their degradation, (2) and sequester the DSB for repair by NHEJ. Acts as a scaffold protein to aid the localization of DNA repair proteins to the site of damage. The assembly of the DNA-PK complex at DNA ends is also required for the NHEJ ligation step. Found at the ends of chromosomes, suggesting a further role in the maintenance of telomeric stability and the prevention of chromosomal end fusion. Also involved in modulation of transcription. As part of the DNA-PK complex, involved in the early steps of ribosome assembly by promoting the processing of precursor rRNA into mature 18S rRNA in the small-subunit processome. Binding to U3 small nucleolar RNA, recruits PRKDC and XRCC5/Ku86 to the small-subunit processome. Recognizes the substrate consensus sequence [ST]-Q. Phosphorylates 'Ser-139' of histone variant H2AX, thereby regulating DNA damage response mechanism. Phosphorylates ASF1A, DCLRE1C, c-Abl/ABL1, histone H1, HSPCA, c-jun/JUN, p53/TP53, PARP1, POU2F1, DHX9, FH, SRF, NHEJ1/XLF, XRCC1, XRCC4, XRCC5, XRCC6, WRN, MYC and RFA2. Can phosphorylate C1D not only in the presence of linear DNA but also in the presence of supercoiled DNA. Ability to phosphorylate p53/TP53 in the presence of supercoiled DNA is dependent on C1D. Acts as a regulator of the phosphatidylinositol 3-kinase/protein kinase B signal transduction by mediating phosphorylation of 'Ser-473' of protein kinase B (PKB/AKT1, PKB/AKT2, PKB/AKT3), promoting their activation. Contributes to the determination of the circadian period length by antagonizing phosphorylation of CRY1 'Ser-588' and increasing CRY1 protein stability, most likely through an indirect mechanism. Plays a role in the regulation of DNA virus-mediated innate immune response by assembling into the HDP-RNP complex, a complex that serves as a platform for IRF3 phosphorylation and subsequent innate immune response activation through the cGAS-STING pathway. Also regulates the cGAS-STING pathway by catalyzing phosphorylation of CGAS, thereby impairing CGAS oligomerization and activation. Also regulates the cGAS-STING pathway by mediating phosphorylation of PARP1. This is DNA-dependent protein kinase catalytic subunit (PRKDC) from Homo sapiens (Human).